A 199-amino-acid chain; its full sequence is Small ribosomal subunit protein eS1 (199 aa).

The protein belongs to the eukaryotic ribosomal protein eS1 family.

In Pyrococcus horikoshii (strain ATCC 700860 / DSM 12428 / JCM 9974 / NBRC 100139 / OT-3), this protein is Small ribosomal subunit protein eS1.